A 234-amino-acid chain; its full sequence is MSTFGGPGTAARDDLAQDFVAFAVEAGVLRFGEFKTKAGRLSPYFFNAGLFDDGAKLGRLAEFYARRMQASGLAFDMIFGPAYKGITLAAAVAIELARLGRNLPYAYNRKETKDHGEGGSLVGAKLHGRVVIIDDVISAGTSVRESVAMIRAAGAEPCGVAIALDRQERATETTQDGVRDADHSAVQFVQRELGLAVCAIATLSDLLQYLARQADPALAQHLPRVQAYRDRYGV.

A 5-phospho-alpha-D-ribose 1-diphosphate-binding site is contributed by lysine 37. 45–46 (FF) serves as a coordination point for orotate. 5-phospho-alpha-D-ribose 1-diphosphate is bound by residues 83–84 (YK), arginine 109, lysine 110, lysine 113, histidine 115, and 134–142 (DDVISAGTS). Orotate-binding residues include serine 138 and arginine 166.

The protein belongs to the purine/pyrimidine phosphoribosyltransferase family. PyrE subfamily. As to quaternary structure, homodimer. It depends on Mg(2+) as a cofactor.

The catalysed reaction is orotidine 5'-phosphate + diphosphate = orotate + 5-phospho-alpha-D-ribose 1-diphosphate. Its pathway is pyrimidine metabolism; UMP biosynthesis via de novo pathway; UMP from orotate: step 1/2. Its function is as follows. Catalyzes the transfer of a ribosyl phosphate group from 5-phosphoribose 1-diphosphate to orotate, leading to the formation of orotidine monophosphate (OMP). The sequence is that of Orotate phosphoribosyltransferase from Methylibium petroleiphilum (strain ATCC BAA-1232 / LMG 22953 / PM1).